A 156-amino-acid polypeptide reads, in one-letter code: Small ribosomal subunit protein uS7 (156 aa).

Belongs to the universal ribosomal protein uS7 family. As to quaternary structure, part of the 30S ribosomal subunit. Contacts proteins S9 and S11.

Functionally, one of the primary rRNA binding proteins, it binds directly to 16S rRNA where it nucleates assembly of the head domain of the 30S subunit. Is located at the subunit interface close to the decoding center, probably blocks exit of the E-site tRNA. The polypeptide is Small ribosomal subunit protein uS7 (Bartonella henselae (strain ATCC 49882 / DSM 28221 / CCUG 30454 / Houston 1) (Rochalimaea henselae)).